We begin with the raw amino-acid sequence, 731 residues long: Ubiquitin carboxyl-terminal hydrolase 17 (731 aa).

Residues Cys-57, Cys-60, Cys-68, Cys-71, Cys-77, Cys-81, His-90, and Cys-94 each coordinate Zn(2+). The MYND-type zinc finger occupies 57–94; that stretch reads CAVCLYPTTTRCSQCKSVRYCSSKCQILHWRRGHKEEC. Disordered stretches follow at residues 171 to 219 and 262 to 281; these read YETR…DSAN and LPSK…SGLK. Composition is skewed to polar residues over residues 207–219 and 265–281; these read GNQN…DSAN and KANS…SGLK. The region spanning 329 to 633 is the USP domain; it reads FGLVNLGNSC…GAYMLLYARD (305 aa). Catalysis depends on Cys-338, which acts as the Nucleophile. Residue His-592 is the Proton acceptor of the active site. A disordered region spans residues 637-702; that stretch reads PVSKNGGRKS…TSSCSTKDSS (66 aa). The segment covering 677–701 has biased composition (low complexity); sequence DWSSGSLSSMFSSSDTTSSCSTKDS.

The protein belongs to the peptidase C19 family.

The catalysed reaction is Thiol-dependent hydrolysis of ester, thioester, amide, peptide and isopeptide bonds formed by the C-terminal Gly of ubiquitin (a 76-residue protein attached to proteins as an intracellular targeting signal).. Its function is as follows. Recognizes and hydrolyzes the peptide bond at the C-terminal Gly of ubiquitin. Involved in the processing of poly-ubiquitin precursors as well as that of ubiquitinated proteins. In Arabidopsis thaliana (Mouse-ear cress), this protein is Ubiquitin carboxyl-terminal hydrolase 17 (UBP17).